We begin with the raw amino-acid sequence, 544 residues long: POTE ankyrin domain family member B2 (544 aa).

ANK repeat units follow at residues 135-167, 168-200, 201-233, 234-266, and 267-299; these read QKRT…VLDN, KKRT…IQDE, YGNT…SKNK, CGLT…ALDR, and YGRT…SQDL. The interval 332–457 is disordered; it reads SSENSNPEQD…NTGISQDEIL (126 aa). Basic and acidic residues-rich tracts occupy residues 340-355 and 364-375; these read QDLK…RLKV and MSQEPEINKDCD. Polar residues predominate over residues 439–457; sequence TQKQLSEEQNTGISQDEIL.

Belongs to the POTE family.

This is POTE ankyrin domain family member B2 (POTEB2) from Homo sapiens (Human).